Reading from the N-terminus, the 273-residue chain is Putative phosphoenolpyruvate synthase regulatory protein (273 aa).

Residue 154–161 (GVSRSGKT) participates in ADP binding.

Belongs to the pyruvate, phosphate/water dikinase regulatory protein family. PSRP subfamily.

The catalysed reaction is [pyruvate, water dikinase] + ADP = [pyruvate, water dikinase]-phosphate + AMP + H(+). The enzyme catalyses [pyruvate, water dikinase]-phosphate + phosphate + H(+) = [pyruvate, water dikinase] + diphosphate. Its function is as follows. Bifunctional serine/threonine kinase and phosphorylase involved in the regulation of the phosphoenolpyruvate synthase (PEPS) by catalyzing its phosphorylation/dephosphorylation. The chain is Putative phosphoenolpyruvate synthase regulatory protein from Halorhodospira halophila (strain DSM 244 / SL1) (Ectothiorhodospira halophila (strain DSM 244 / SL1)).